The following is a 104-amino-acid chain: Protein RnfH (104 aa).

Belongs to the UPF0125 (RnfH) family.

This is Protein RnfH from Pseudomonas fluorescens (strain Pf0-1).